The following is a 481-amino-acid chain: Glutamate--tRNA ligase (481 aa).

The 'HIGH' region motif lies at 11–21; that stretch reads PSPTGLLHIGN. The 'KMSKS' region motif lies at 255 to 259; that stretch reads KLSKR. Lys258 lines the ATP pocket.

This sequence belongs to the class-I aminoacyl-tRNA synthetase family. Glutamate--tRNA ligase type 1 subfamily. As to quaternary structure, monomer.

The protein localises to the cytoplasm. It catalyses the reaction tRNA(Glu) + L-glutamate + ATP = L-glutamyl-tRNA(Glu) + AMP + diphosphate. Its function is as follows. Catalyzes the attachment of glutamate to tRNA(Glu) in a two-step reaction: glutamate is first activated by ATP to form Glu-AMP and then transferred to the acceptor end of tRNA(Glu). The polypeptide is Glutamate--tRNA ligase (Streptococcus pyogenes serotype M3 (strain ATCC BAA-595 / MGAS315)).